Reading from the N-terminus, the 94-residue chain is MRTFAIFLLIALGWLQYTLWFGKNGMSDYAQVSNDVALQEEVNQGLRNRNEQMFAEIDDLKKGSEAIEERARHELGMIKKGETFYRIIDENSEG.

The Cytoplasmic portion of the chain corresponds to 1–3; sequence MRT. A helical membrane pass occupies residues 4-21; the sequence is FAIFLLIALGWLQYTLWF. Over 22–94 the chain is Periplasmic; that stretch reads GKNGMSDYAQ…YRIIDENSEG (73 aa). The stretch at 33 to 71 forms a coiled coil; sequence SNDVALQEEVNQGLRNRNEQMFAEIDDLKKGSEAIEERA.

Belongs to the FtsB family. As to quaternary structure, part of a complex composed of FtsB, FtsL and FtsQ.

Its subcellular location is the cell inner membrane. In terms of biological role, essential cell division protein. May link together the upstream cell division proteins, which are predominantly cytoplasmic, with the downstream cell division proteins, which are predominantly periplasmic. The sequence is that of Cell division protein FtsB from Aliivibrio fischeri (strain ATCC 700601 / ES114) (Vibrio fischeri).